The following is a 368-amino-acid chain: Probable multidrug ABC transporter permease YbhR (368 aa).

Over 1 to 24 (MFHRLWTLIRKELQSLLREPQTRA) the chain is Cytoplasmic. The chain crosses the membrane as a helical span at residues 25-45 (ILILPVLIQVILFPFAATLEV). Topologically, residues 46-173 (TNATIAIYDE…WYNPNLDYKW (128 aa)) are periplasmic. The ABC transmembrane type-2 domain maps to 129-366 (AQIAANYLQQ…SAAYAMFRRK (238 aa)). The chain crosses the membrane as a helical span at residues 174–194 (FVVPSLIAMITTIGVMIVTSL). The Cytoplasmic segment spans residues 195–222 (SVAREREQGTLDQLLVSPLTTWQIFIGK). The chain crosses the membrane as a helical span at residues 223 to 243 (AVPALIVATFQATIVLAIGIW). Residues 244-253 (AYQIPFAGSL) are Periplasmic-facing. The helical transmembrane segment at 254–274 (ALFYFTMVIYGLSLVGFGLLI) threads the bilayer. The Cytoplasmic segment spans residues 275–284 (SSLCSTQQQA). A helical transmembrane segment spans residues 285-305 (FIGVFVFMMPAILLSGYVSPV). At 306–339 (ENMPVWLQNLTWINPIRHFTDITKQIYLKDASLD) the chain is on the periplasmic side. The helical transmembrane segment at 340-360 (IVWNSLWPLLVITATTGSAAY) threads the bilayer. Residues 361–368 (AMFRRKVM) lie on the Cytoplasmic side of the membrane.

This sequence belongs to the ABC-2 integral membrane protein family. The complex is probably composed of two ATP-binding proteins (YbhF) and two transmembrane proteins (YbhR and YbhS).

The protein resides in the cell inner membrane. Its function is as follows. Part of the ABC transporter complex YbhFSR that could be involved in efflux of cefoperazone. Probably involved in the translocation of the substrate across the membrane. In Escherichia coli O157:H7, this protein is Probable multidrug ABC transporter permease YbhR (ybhR).